The primary structure comprises 257 residues: V-type proton ATPase subunit D (257 aa).

The interval 215–257 (KEQEAAQKALEGPGPGEDAAHSENNPPRNLLASEEDNLPVLFN) is disordered.

It belongs to the V-ATPase D subunit family. As to quaternary structure, V-ATPase is a heteromultimeric enzyme made up of two complexes: the ATP-hydrolytic V1 complex and the proton translocation V0 complex. The V1 complex consists of three catalytic AB heterodimers that form a heterohexamer, three peripheral stalks each consisting of EG heterodimers, one central rotor including subunits D and F, and the regulatory subunits C and H. The proton translocation complex V0 consists of the proton transport subunit a, a ring of proteolipid subunits c9c'', rotary subunit d, subunits e and f, and the accessory subunits vah-19/Ac45 and vah-20/PRR.

Subunit of the V1 complex of vacuolar(H+)-ATPase (V-ATPase), a multisubunit enzyme composed of a peripheral complex (V1) that hydrolyzes ATP and a membrane integral complex (V0) that translocates protons. V-ATPase is responsible for acidifying and maintaining the pH of intracellular compartments and in some cell types, is targeted to the plasma membrane, where it is responsible for acidifying the extracellular environment. The protein is V-type proton ATPase subunit D of Caenorhabditis elegans.